The chain runs to 293 residues: Ribosomal protein L11 methyltransferase (293 aa).

4 residues coordinate S-adenosyl-L-methionine: Thr145, Gly166, Asp188, and Asn229.

The protein belongs to the methyltransferase superfamily. PrmA family.

Its subcellular location is the cytoplasm. The enzyme catalyses L-lysyl-[protein] + 3 S-adenosyl-L-methionine = N(6),N(6),N(6)-trimethyl-L-lysyl-[protein] + 3 S-adenosyl-L-homocysteine + 3 H(+). Methylates ribosomal protein L11. This chain is Ribosomal protein L11 methyltransferase, found in Idiomarina loihiensis (strain ATCC BAA-735 / DSM 15497 / L2-TR).